The primary structure comprises 63 residues: Bowman-birk type proteinase inhibitor 2 (63 aa).

7 disulfides stabilise this stretch: Cys7/Cys61, Cys8/Cys23, Cys11/Cys57, Cys13/Cys21, Cys31/Cys38, Cys35/Cys50, and Cys40/Cys48.

It belongs to the Bowman-Birk serine protease inhibitor family. As to quaternary structure, exists as a dimer in its native form.

Functionally, inhibits trypsin, chymotrypsin, plasmin and factor XIIa. Does not inhibit factor Xa, thrombin, human plasma kallikrein, porcine pancreatic kallikrein and human urinary kallikrein. The sequence is that of Bowman-birk type proteinase inhibitor 2 from Amburana cearensis (Cerejeira).